The primary structure comprises 695 residues: tRNA wybutosine-synthesizing protein 4 (695 aa).

S-adenosyl-L-methionine-binding positions include Lys38, Arg88, Gly115, 146 to 147, 196 to 197, and Glu224; these read DY and DL. The Proton donor; for both methylation and methoxycarbonylation activities role is filled by Arg88. Tyr229 serves as the catalytic Proton acceptor; for methoxycarbonylation activity.

This sequence belongs to the methyltransferase superfamily. LCMT family.

The protein resides in the cytoplasm. Its subcellular location is the mitochondrion. The enzyme catalyses 7-[(3S)-3-amino-3-carboxypropyl]wyosine(37) in tRNA(Phe) + S-adenosyl-L-methionine = 7-[(3S)-(3-amino-3-methoxycarbonyl)propyl]wyosine(37) in tRNA(Phe) + S-adenosyl-L-homocysteine. It catalyses the reaction 7-[(3S)-(3-amino-3-methoxycarbonyl)propyl]wyosine(37) in tRNA(Phe) + S-adenosyl-L-methionine + CO2 = wybutosine(37) in tRNA(Phe) + S-adenosyl-L-homocysteine + 2 H(+). It participates in tRNA modification; wybutosine-tRNA(Phe) biosynthesis. In terms of biological role, S-adenosyl-L-methionine-dependent methyltransferase that acts as a component of the wybutosine biosynthesis pathway. Wybutosine is a hyper modified guanosine with a tricyclic base found at the 3'-position adjacent to the anticodon of eukaryotic phenylalanine tRNA. Catalyzes the final 2 independent reactions, methylation of the alpha-carboxy group of wybutosine-72 to form wybutosine-58, and methoxycarbonylation of alpha-amino group of wybutosine-58 through the fixation of CO(2) to complete wybutosine. The chain is tRNA wybutosine-synthesizing protein 4 (PPM2) from Saccharomyces cerevisiae (strain ATCC 204508 / S288c) (Baker's yeast).